A 175-amino-acid chain; its full sequence is Large ribosomal subunit protein uL10 (175 aa).

It belongs to the universal ribosomal protein uL10 family. Part of the ribosomal stalk of the 50S ribosomal subunit. The N-terminus interacts with L11 and the large rRNA to form the base of the stalk. The C-terminus forms an elongated spine to which L12 dimers bind in a sequential fashion forming a multimeric L10(L12)X complex.

Its function is as follows. Forms part of the ribosomal stalk, playing a central role in the interaction of the ribosome with GTP-bound translation factors. The polypeptide is Large ribosomal subunit protein uL10 (Cyanothece sp. (strain PCC 7425 / ATCC 29141)).